Reading from the N-terminus, the 385-residue chain is HAT1-interacting factor 1 (385 aa).

Residues 80–199 (GNLFGDALLA…RKSGFHIYFE (120 aa)) are important for interaction with heterotetrameric histone H3 and H4 and for interaction with dimeric histone H2A and H2B. Low complexity-rich tracts occupy residues 85–97 (DALLAGDDGSGSE) and 105–116 (DVSNGEEGNENG). The segment at 85–163 (DALLAGDDGS…EEENVEKEEE (79 aa)) is disordered. Acidic residues predominate over residues 129 to 160 (DQEEEDLTGDVDSGDSEDSGEGSEEEEENVEK). Ser-174 is modified (phosphoserine). TPR repeat units lie at residues 186–220 (VSQLRKSGFHIYFENDLYENALDLLAQALMLLGRP), 229–262 (ENSRLRIGDVYILMGDIEREAEMFSRAIHHYLKA), and 289–322 (ALRWVDQVPAKDKLKRFKHAKALLEKHMTTRPKD). The tract at residues 248 to 332 (EAEMFSRAIH…SELQQARLAQ (85 aa)) is interaction with dimeric histone H2A and H2B. Positions 340 to 385 (VQENQQHGSKRPLSQPTTSIGFPALEKPLGDFNDLSQLVKKKPRRH) are disordered. The span at 342–359 (ENQQHGSKRPLSQPTTSI) shows a compositional bias: polar residues.

Belongs to the NASP family. Homodimer. The homodimer interacts with a histone tetramer containing H3 and H4; the interaction is direct. The homodimer interacts with heterodimeric histone H2A and H2B; the interaction is direct. Component of the nuclear histone acetyltransferase B (HAT-B) complex composed of at least HAT1, HAT2 and HIF1. Does not interact with HAT1 in the absence of HAT2. Interacts with histones H3 and H4 in a HAT1/HAT2 dependent manner. Interaction with heterotetrameric histone H3 and H4 precludes interaction with dimeric histone H2A and H2B, irrespective of the fact that their binding involves non-identical regions of the protein.

It is found in the nucleus. In terms of biological role, histone H3 and H4 specific chaperone component of the nuclear histone acetyltransferase B (HAT-B) complex. Involved in chromatin assembly and telomere silencing. This chain is HAT1-interacting factor 1 (HIF1), found in Saccharomyces cerevisiae (strain ATCC 204508 / S288c) (Baker's yeast).